The sequence spans 268 residues: Tryptophan synthase alpha chain (268 aa).

Active-site proton acceptor residues include glutamate 49 and aspartate 60.

The protein belongs to the TrpA family. As to quaternary structure, tetramer of two alpha and two beta chains.

The catalysed reaction is (1S,2R)-1-C-(indol-3-yl)glycerol 3-phosphate + L-serine = D-glyceraldehyde 3-phosphate + L-tryptophan + H2O. Its pathway is amino-acid biosynthesis; L-tryptophan biosynthesis; L-tryptophan from chorismate: step 5/5. Its function is as follows. The alpha subunit is responsible for the aldol cleavage of indoleglycerol phosphate to indole and glyceraldehyde 3-phosphate. This chain is Tryptophan synthase alpha chain, found in Edwardsiella ictaluri (strain 93-146).